The chain runs to 747 residues: Endoglucanase C (747 aa).

The first 37 residues, 1-37, serve as a signal peptide directing secretion; it reads MGHVTSPSKRYPASFKRAGSILGVSIALAAFSNVAAA. One can recognise a CBM2 domain in the interval 38–136; the sequence is GCEYVVTNSW…TVNGAACTGG (99 aa). Cystine bridges form between C39/C133, C183/C214, and C193/C208. The region spanning 182–211 is the CBM10 domain; it reads QCNWYGTLYPLCVSTTSGWGYENNRSCISP. The segment at 226–283 is disordered; it reads GSSSPSSISSSSVRSSSSSSVVPPSSSSSSSVPSSSSSSVSSSSVVSSSSSSVSVPGT. Residues 227–281 are compositionally biased toward low complexity; it reads SSSPSSISSSSVRSSSSSSVVPPSSSSSSSVPSSSSSSVSSSSVVSSSSSSVSVP. The segment at 280–747 is catalytic; that stretch reads VPGTGVFRVN…TQLLHNMWGL (468 aa). E502 acts as the Proton donor in catalysis. Residue E652 is the Nucleophile of the active site.

Belongs to the glycosyl hydrolase 5 (cellulase A) family.

The catalysed reaction is Endohydrolysis of (1-&gt;4)-beta-D-glucosidic linkages in cellulose, lichenin and cereal beta-D-glucans.. This is Endoglucanase C (celC) from Cellvibrio japonicus (strain Ueda107) (Pseudomonas fluorescens subsp. cellulosa).